The primary structure comprises 553 residues: Replication factor C large subunit (553 aa).

ATP is bound at residue 50–57 (GGPGVGKT). The interval 438-553 (GKRPGKPEAG…SKKQRTLFDF (116 aa)) is disordered. The span at 442–451 (GKPEAGEPRE) shows a compositional bias: basic and acidic residues. The segment covering 503 to 513 (EAPMAAAMPAA) has biased composition (low complexity). Over residues 532 to 553 (EPEKPPAAEDKCSKKQRTLFDF) the composition is skewed to basic and acidic residues.

The protein belongs to the activator 1 small subunits family. RfcL subfamily. In terms of assembly, heteromultimer composed of small subunits (RfcS) and large subunits (RfcL).

Part of the RFC clamp loader complex which loads the PCNA sliding clamp onto DNA. The polypeptide is Replication factor C large subunit (Methanocella arvoryzae (strain DSM 22066 / NBRC 105507 / MRE50)).